The chain runs to 149 residues: 3-dehydroquinate dehydratase (149 aa).

Tyr24 (proton acceptor) is an active-site residue. Substrate contacts are provided by Asn75, His81, and Asp88. Residue His101 is the Proton donor of the active site. Substrate-binding positions include 102-103 and Arg112; that span reads IS.

It belongs to the type-II 3-dehydroquinase family. As to quaternary structure, homododecamer.

It catalyses the reaction 3-dehydroquinate = 3-dehydroshikimate + H2O. It functions in the pathway metabolic intermediate biosynthesis; chorismate biosynthesis; chorismate from D-erythrose 4-phosphate and phosphoenolpyruvate: step 3/7. Catalyzes a trans-dehydration via an enolate intermediate. The chain is 3-dehydroquinate dehydratase from Methylobacterium radiotolerans (strain ATCC 27329 / DSM 1819 / JCM 2831 / NBRC 15690 / NCIMB 10815 / 0-1).